The sequence spans 303 residues: Hydroxyacylglutathione hydrolase, mitochondrial (303 aa).

6 residues coordinate Zn(2+): H97, H99, D101, H102, H153, and D177. Substrate is bound by residues 186–188 (KFF), 216–218 (HEY), and 292–295 (RKEK). H216 serves as a coordination point for Zn(2+).

It belongs to the metallo-beta-lactamase superfamily. Glyoxalase II family. As to quaternary structure, monomer. Requires Zn(2+) as cofactor.

The protein localises to the mitochondrion matrix. Its subcellular location is the cytoplasm. The enzyme catalyses an S-(2-hydroxyacyl)glutathione + H2O = a 2-hydroxy carboxylate + glutathione + H(+). It catalyses the reaction (R)-S-lactoylglutathione + H2O = (R)-lactate + glutathione + H(+). In terms of biological role, thiolesterase that catalyzes the hydrolysis of S-D-lactoyl-glutathione to form glutathione and D-lactic acid. The protein is Hydroxyacylglutathione hydrolase, mitochondrial (hagh) of Danio rerio (Zebrafish).